The chain runs to 393 residues: Tryptophan synthase beta chain (393 aa).

K85 is modified (N6-(pyridoxal phosphate)lysine).

Belongs to the TrpB family. In terms of assembly, tetramer of two alpha and two beta chains. The cofactor is pyridoxal 5'-phosphate.

The catalysed reaction is (1S,2R)-1-C-(indol-3-yl)glycerol 3-phosphate + L-serine = D-glyceraldehyde 3-phosphate + L-tryptophan + H2O. It participates in amino-acid biosynthesis; L-tryptophan biosynthesis; L-tryptophan from chorismate: step 5/5. Functionally, the beta subunit is responsible for the synthesis of L-tryptophan from indole and L-serine. The sequence is that of Tryptophan synthase beta chain (trpB) from Helicobacter pylori (strain J99 / ATCC 700824) (Campylobacter pylori J99).